Reading from the N-terminus, the 361-residue chain is Chorismate synthase (361 aa).

Residues Arg-48 and Arg-54 each coordinate NADP(+). Residues 131 to 133, 243 to 244, Gly-287, 302 to 306, and Arg-328 each bind FMN; these read RSS, NA, and KPTSS.

The protein belongs to the chorismate synthase family. Homotetramer. FMNH2 is required as a cofactor.

It carries out the reaction 5-O-(1-carboxyvinyl)-3-phosphoshikimate = chorismate + phosphate. Its pathway is metabolic intermediate biosynthesis; chorismate biosynthesis; chorismate from D-erythrose 4-phosphate and phosphoenolpyruvate: step 7/7. In terms of biological role, catalyzes the anti-1,4-elimination of the C-3 phosphate and the C-6 proR hydrogen from 5-enolpyruvylshikimate-3-phosphate (EPSP) to yield chorismate, which is the branch point compound that serves as the starting substrate for the three terminal pathways of aromatic amino acid biosynthesis. This reaction introduces a second double bond into the aromatic ring system. This is Chorismate synthase from Rhodopseudomonas palustris (strain BisA53).